A 208-amino-acid chain; its full sequence is CASP-like protein 2A1 (208 aa).

Topologically, residues 1-36 (MSKMAEQKAAAVDGLGGAGAADAAPAGEAAAARVRP) are cytoplasmic. The helical transmembrane segment at 37-57 (VETLLRAAPLGLCVAAMTVML) threads the bilayer. At 58–78 (RDQQSNEYGTVAYSDLGGFKY) the chain is on the extracellular side. The chain crosses the membrane as a helical span at residues 79–99 (LVYANGLCAAYSLVSAFYTAV). Residues 100–108 (PRPATVSRS) lie on the Cytoplasmic side of the membrane. The helical transmembrane segment at 109-129 (WVVFLLDQVFTYLILAAGAAA) threads the bilayer. Topologically, residues 130–161 (AELLYLAYNGDKEVTWSEACGVFGSFCRQART) are extracellular. Residues 162 to 182 (SVAITFGTVLCFILLSLISSY) traverse the membrane as a helical segment. The Cytoplasmic segment spans residues 183-208 (RLFSAYEAPPSSALGSKGVEIAAYPR).

This sequence belongs to the Casparian strip membrane proteins (CASP) family. In terms of assembly, homodimer and heterodimers.

It localises to the cell membrane. The sequence is that of CASP-like protein 2A1 from Sorghum bicolor (Sorghum).